Reading from the N-terminus, the 546-residue chain is Sulfite oxidase, mitochondrial (546 aa).

The transit peptide at 1-80 (MLLQLYRSVV…YHEHRCRASQ (80 aa)) directs the protein to the mitochondrion. The Cytochrome b5 heme-binding domain occupies 83 to 162 (PRMYSKEDVR…LAEYKIGELN (80 aa)). A heme b-binding site is contributed by His119. The residue at position 124 (Ser124) is a Phosphoserine. Positions 144, 146, and 148 each coordinate heme b. Residues 166–175 (SMSPSVEASD) form a hinge region. The moco domain stretch occupies residues 176 to 402 (PYADDPIRHP…YSHWQRRDYK (227 aa)). Residues 216-220 (FTRNH), Cys265, Asp323, His362, Arg367, and 378-380 (HVK) contribute to the Mo-molybdopterin site. A homodimerization region spans residues 403 to 539 (GFSPSVDWDT…RGVLSNAWHR (137 aa)).

In terms of assembly, homodimer. Heme b is required as a cofactor. Mo-molybdopterin serves as cofactor.

The protein localises to the mitochondrion intermembrane space. The catalysed reaction is sulfite + O2 + H2O = sulfate + H2O2. It functions in the pathway energy metabolism; sulfur metabolism. Functionally, catalyzes the oxidation of sulfite to sulfate, the terminal reaction in the oxidative degradation of sulfur-containing amino acids. The sequence is that of Sulfite oxidase, mitochondrial (Suox) from Mus musculus (Mouse).